The sequence spans 227 residues: 7-cyano-7-deazaguanine synthase (227 aa).

An ATP-binding site is contributed by 9–19 (LSGGLDSATVL). Zn(2+) contacts are provided by Cys189, Cys199, Cys202, and Cys205.

Belongs to the QueC family. The cofactor is Zn(2+).

It carries out the reaction 7-carboxy-7-deazaguanine + NH4(+) + ATP = 7-cyano-7-deazaguanine + ADP + phosphate + H2O + H(+). It participates in purine metabolism; 7-cyano-7-deazaguanine biosynthesis. Its function is as follows. Catalyzes the ATP-dependent conversion of 7-carboxy-7-deazaguanine (CDG) to 7-cyano-7-deazaguanine (preQ(0)). The chain is 7-cyano-7-deazaguanine synthase from Cupriavidus metallidurans (strain ATCC 43123 / DSM 2839 / NBRC 102507 / CH34) (Ralstonia metallidurans).